Here is a 1220-residue protein sequence, read N- to C-terminus: DNA polymerase catalytic subunit (1220 aa).

Belongs to the DNA polymerase type-B family. In terms of assembly, forms a complex with the ssDNA-binding protein, the DNA polymerase processivity factor, and the alkaline exonuclease. Interacts with the helicase-primase complex composed of the primase, the helicase and the primase-associated factor; this interaction may coordinate leading and lagging strand DNA synthesis at the replication fork.

It localises to the host nucleus. It carries out the reaction DNA(n) + a 2'-deoxyribonucleoside 5'-triphosphate = DNA(n+1) + diphosphate. The enzyme catalyses Endonucleolytic cleavage to 5'-phosphomonoester.. In terms of biological role, replicates viral genomic DNA. The replication complex is composed of six viral proteins: the DNA polymerase, processivity factor, primase, primase-associated factor, helicase, and ssDNA-binding protein. Additionally, the polymerase contains an intrinsic ribonuclease H (RNase H) activity that specifically degrades RNA/DNA heteroduplexes or duplex DNA substrates in the 5' to 3' direction. Therefore, it can catalyze the excision of the RNA primers that initiate the synthesis of Okazaki fragments at a replication fork during viral DNA replication. The protein is DNA polymerase catalytic subunit (MDV043) of Gallid herpesvirus 2 (strain Chicken/Md5/ATCC VR-987) (GaHV-2).